A 150-amino-acid polypeptide reads, in one-letter code: uncharacterized protein (150 aa).

The protein belongs to the aspartate/glutamate racemases family.

This is an uncharacterized protein from Pectobacterium carotovorum subsp. carotovorum (Erwinia carotovora subsp. carotovora).